The sequence spans 89 residues: Large ribosomal subunit protein bL27 (89 aa).

The segment at 1–21 (MAHKKSGGSSSNGRDSESKRL) is disordered.

This sequence belongs to the bacterial ribosomal protein bL27 family.

This chain is Large ribosomal subunit protein bL27, found in Caulobacter vibrioides (strain NA1000 / CB15N) (Caulobacter crescentus).